The chain runs to 235 residues: Protein C1orf43 homolog (235 aa).

A helical membrane pass occupies residues 11 to 31 (VNVVLVMAYGSLVFVLLFIFV).

Its subcellular location is the membrane. It is found in the golgi apparatus. The protein localises to the mitochondrion. General regulator of phagocytosis. Required to uptake Gram negative bacterium by macrophages. The chain is Protein C1orf43 homolog from Rattus norvegicus (Rat).